The chain runs to 101 residues: Small ribosomal subunit protein uS14 (101 aa).

The protein belongs to the universal ribosomal protein uS14 family. In terms of assembly, part of the 30S ribosomal subunit. Contacts proteins S3 and S10.

Its function is as follows. Binds 16S rRNA, required for the assembly of 30S particles and may also be responsible for determining the conformation of the 16S rRNA at the A site. This chain is Small ribosomal subunit protein uS14, found in Burkholderia vietnamiensis (strain G4 / LMG 22486) (Burkholderia cepacia (strain R1808)).